The primary structure comprises 555 residues: Sulfite reductase [NADPH] hemoprotein beta-component (555 aa).

4 residues coordinate [4Fe-4S] cluster: Cys-430, Cys-436, Cys-475, and Cys-479. Cys-479 is a siroheme binding site.

This sequence belongs to the nitrite and sulfite reductase 4Fe-4S domain family. As to quaternary structure, alpha(8)-beta(8). The alpha component is a flavoprotein, the beta component is a hemoprotein. Siroheme serves as cofactor. It depends on [4Fe-4S] cluster as a cofactor.

The catalysed reaction is hydrogen sulfide + 3 NADP(+) + 3 H2O = sulfite + 3 NADPH + 4 H(+). Its pathway is sulfur metabolism; hydrogen sulfide biosynthesis; hydrogen sulfide from sulfite (NADPH route): step 1/1. Its function is as follows. Component of the sulfite reductase complex that catalyzes the 6-electron reduction of sulfite to sulfide. This is one of several activities required for the biosynthesis of L-cysteine from sulfate. The sequence is that of Sulfite reductase [NADPH] hemoprotein beta-component from Leptospira biflexa serovar Patoc (strain Patoc 1 / Ames).